Reading from the N-terminus, the 81-residue chain is Protein Vpu (81 aa).

At 1-7 (MQPLVII) the chain is on the extracellular side. The helical transmembrane segment at 8-28 (AIAALVVAIIIAIVVWTIVYI) threads the bilayer. Residues 29 to 81 (EYRRIKRQRKIDCLIDRIRERAEDSGNESEGEREELSKLVEMGHHAPWDVDDL) lie on the Cytoplasmic side of the membrane. Residues 50-81 (AEDSGNESEGEREELSKLVEMGHHAPWDVDDL) are disordered. Ser-53 and Ser-57 each carry phosphoserine; by host CK2. The segment covering 62–81 (EELSKLVEMGHHAPWDVDDL) has biased composition (basic and acidic residues).

This sequence belongs to the HIV-1 VPU protein family. As to quaternary structure, homopentamer. Interacts with host CD4 and BRTC; these interactions induce proteasomal degradation of CD4. Interacts with host BST2; this interaction leads to the degradation of host BST2. Interacts with host FBXW11. Interacts with host AP1M1; this interaction plays a role in the mistrafficking and subsequent degradation of host BST2. Interacts with host RANBP2; this interaction allows Vpu to down-regulate host BLM sumoylation. Post-translationally, phosphorylated by host CK2. This phosphorylation is necessary for interaction with human BTRC and degradation of CD4.

Its subcellular location is the host membrane. Its activity is regulated as follows. Ion channel activity is inhibited by hexamethylene amiloride in vitro. Enhances virion budding by targeting host CD4 and Tetherin/BST2 to proteasome degradation. Degradation of CD4 prevents any unwanted premature interactions between viral Env and its host receptor CD4 in the endoplasmic reticulum. Degradation of antiretroviral protein Tetherin/BST2 is important for virion budding, as BST2 tethers new viral particles to the host cell membrane. Mechanistically, Vpu bridges either CD4 or BST2 to BTRC, a substrate recognition subunit of the Skp1/Cullin/F-box protein E3 ubiquitin ligase, induces their ubiquitination and subsequent proteasomal degradation. The alteration of the E3 ligase specificity by Vpu seems to promote the degradation of host IKBKB, leading to NF-kappa-B down-regulation and subsequent apoptosis. Acts as a viroporin that forms an oligomeric ion channel in membranes. Modulates the host DNA repair mechanisms to promote degradation of nuclear viral cDNA in cells that are already productively infected in order to suppress immune sensing and proviral hyper-integration (superinfection). Manipulates PML-NBs and modulates SUMOylation of host BLM protein thereby enhancing its DNA-end processing activity toward viral unintegrated linear DNA. Also inhibits RAD52-mediated homologous repair of viral cDNA, preventing the generation of dead-end circular forms of single copies of the long terminal repeat and permitting sustained nucleolytic attack. The chain is Protein Vpu from Human immunodeficiency virus type 1 group M subtype D (isolate NDK) (HIV-1).